The primary structure comprises 298 residues: Putative F-box and FNIP repeat-containing protein R286 (298 aa).

Positions 4-48 constitute an F-box domain; sequence LNVLESHVILHIIEFLPDHEKIKFMSTCKSLYEFRCHVTYNNFYV. FNIP repeat units lie at residues 124–165 and 255–297; these read FNKP…LGHN and WNFD…FISR.

This is Putative F-box and FNIP repeat-containing protein R286 from Acanthamoeba polyphaga (Amoeba).